The following is a 1300-amino-acid chain: MNKIYSLKYSHITGGLIAVSELSGRVSSRATGKKKHKRILALCFLGLLQSSYSFASQMDISNFYIRDYMDFAQNKGIFQAGATNIEIVKKDGSTLKLPEVPFPDFSPVANKGSTTSIGGAYSITATHNTKNHHSVATQNWGNSTYKQTDWNTSHPDFAVSRLDKFVVETRGATEGADISLSKQQALERYGVNYKGEKKLIAFRAGSGVVSVKKNGRITPFNEVSYKPEMLNGSFVHIDDWSGWLILTNNQFDEFNNIASQGDSGSALFVYDNQKKKWVVAGTVWGIYNYANGKNHAAYSKWNQTTIDNLKNKYSYNVDMSGAQVATIENGKLTGTGSDTTDIKNKDLIFTGGGDILLKSSFDNGAGGLVFNDKKTYRVNGDDFTFKGAGVDTRNGSTVEWNIRYDNKDNLHKIGDGTLDVRKTQNTNLKTGEGLVILGAEKTFNNIYITSGDGTVRLNAENALSGGEYNGIFFAKNGGTLDLNGYNQSFNKIAATDSGAVITNTSTKKSILSLNNTADYIYHGNINGNLDVLQHHETKKENRRLILDGGVDTTNDISLRNTQLSMQGHATEHAIYRDGAFSCSLPAPMRFLCGSDYVAGMQNTEADAVKQNGNAYKTNNAVSDLSQPDWETGTFRFGTLHLENSDFSVGRNANVIGDIQASKSNITIGDTTAYIDLHAGKNITGDGFGFRQNIVRGNSQGETLFTGGITAEDSTIVIKDKAKALFSNYVYLLNTKATIENGADVTTQSGMFSTSDISISGNLSMTGNPDKDNKFEPSIYLNDASYLLTDDSARLVAKNKASVVGDIHSTKSASIMFGHDESDLSQLSDRTSKGLALGLLGGFDVSYRGSVNAPSASATMNNTWWQLTGDSALKTLKSTNSMVYFTDSANNKKFHTLTVDELATSNSAYAMRTNLSESDKLEVKKHLSGENNILLVDFLQKPTPEKQLNIELVSAPKDTNENVFKASKQTIGFSDVTPVITTRETDDKITWSLTGYNTVANKEATRNAAALFSVDYKAFLNEVNNLNKRMGDLRDINGEAGAWARIMSGTGSASGGFSDNYTHVQVGVDKKHELDGLDLFTGFTVTHTDSSASADVFSGKTKSVGAGLYASAMVDSGAYIDLIGKYVHHDNEYTATFAGLGTRDYSTHSWYAGAEAGYRYHVTEDAWIEPQAELVYGSVSGKQFAWKDQGMHLSMKDKDYNPLIGRTGVDVGKSFSGKDWKVTARAGLGYQFDLLANGETVLRDASGEKRIKGEKDSRMLMSVGLNAEIRDNVRFGLEFEKSAFGKYNVDNAVNANFRYSF.

Residues Met1 to Ala55 form the signal peptide. Residues Gln57–Asn311 form the Peptidase S6 domain. Active-site charge relay system residues include His127, Asp156, and Ser263. The Autotransporter domain occupies Asp1034–Phe1300.

In terms of processing, cleaved to release the mature protein from the outer membrane.

Its subcellular location is the periplasm. It is found in the secreted. It localises to the cell surface. The protein resides in the cell outer membrane. Its function is as follows. Serine protease with cytotoxic effect. Disrupts actin cytoskeleton resulting cell detachment in vitro. This chain is Serine protease EspP (espP), found in Escherichia coli.